The primary structure comprises 82 residues: Acyl carrier protein (82 aa).

The Carrier domain occupies 3-81 (LSREKVLESI…DAVDFIIAAK (79 aa)). Position 41 is an O-(pantetheine 4'-phosphoryl)serine (Ser41).

The protein belongs to the acyl carrier protein (ACP) family. Post-translationally, 4'-phosphopantetheine is transferred from CoA to a specific serine of apo-ACP by AcpS. This modification is essential for activity because fatty acids are bound in thioester linkage to the sulfhydryl of the prosthetic group.

Its subcellular location is the cytoplasm. Its pathway is lipid metabolism; fatty acid biosynthesis. Its function is as follows. Carrier of the growing fatty acid chain in fatty acid biosynthesis. The polypeptide is Acyl carrier protein (Tropheryma whipplei (strain Twist) (Whipple's bacillus)).